Consider the following 433-residue polypeptide: Enolase (433 aa).

Q163 contacts (2R)-2-phosphoglycerate. Catalysis depends on E205, which acts as the Proton donor. 3 residues coordinate Mg(2+): D241, E289, and D316. Residues K341, R370, S371, and K392 each coordinate (2R)-2-phosphoglycerate. Residue K341 is the Proton acceptor of the active site.

It belongs to the enolase family. Mg(2+) serves as cofactor.

The protein resides in the cytoplasm. The protein localises to the secreted. It is found in the cell surface. The catalysed reaction is (2R)-2-phosphoglycerate = phosphoenolpyruvate + H2O. Its pathway is carbohydrate degradation; glycolysis; pyruvate from D-glyceraldehyde 3-phosphate: step 4/5. Functionally, catalyzes the reversible conversion of 2-phosphoglycerate (2-PG) into phosphoenolpyruvate (PEP). It is essential for the degradation of carbohydrates via glycolysis. The protein is Enolase of Treponema denticola (strain ATCC 35405 / DSM 14222 / CIP 103919 / JCM 8153 / KCTC 15104).